The following is a 190-amino-acid chain: Embryo-specific protein ATS3B (190 aa).

Positions 1–24 (MASVRLFFTLISFVFIISTSVYES) are cleaved as a signal peptide. The N-linked (GlcNAc...) asparagine glycan is linked to asparagine 37. Residues 48–158 (CAYTVIISTS…ESVWYGFNYC (111 aa)) enclose the PLAT domain.

In terms of assembly, interacts with EULS3 (via N-terminus). In terms of tissue distribution, expressed in roots, rosette leaves, stems, cauline leaves and flowers.

It localises to the secreted. May play a role during embryo development. This chain is Embryo-specific protein ATS3B, found in Arabidopsis thaliana (Mouse-ear cress).